Reading from the N-terminus, the 114-residue chain is Ribonuclease P protein component (114 aa).

Belongs to the RnpA family. In terms of assembly, consists of a catalytic RNA component (M1 or rnpB) and a protein subunit.

The catalysed reaction is Endonucleolytic cleavage of RNA, removing 5'-extranucleotides from tRNA precursor.. Its function is as follows. RNaseP catalyzes the removal of the 5'-leader sequence from pre-tRNA to produce the mature 5'-terminus. It can also cleave other RNA substrates such as 4.5S RNA. The protein component plays an auxiliary but essential role in vivo by binding to the 5'-leader sequence and broadening the substrate specificity of the ribozyme. The protein is Ribonuclease P protein component of Limosilactobacillus fermentum (strain NBRC 3956 / LMG 18251) (Lactobacillus fermentum).